The sequence spans 616 residues: Dihydroxy-acid dehydratase (616 aa).

Asp81 contacts Mg(2+). A [2Fe-2S] cluster-binding site is contributed by Cys122. Mg(2+) contacts are provided by Asp123 and Lys124. Lys124 carries the N6-carboxylysine modification. Residue Cys195 participates in [2Fe-2S] cluster binding. Position 491 (Glu491) interacts with Mg(2+). Residue Ser517 is the Proton acceptor of the active site.

It belongs to the IlvD/Edd family. Homodimer. [2Fe-2S] cluster is required as a cofactor. Requires Mg(2+) as cofactor.

It carries out the reaction (2R)-2,3-dihydroxy-3-methylbutanoate = 3-methyl-2-oxobutanoate + H2O. It catalyses the reaction (2R,3R)-2,3-dihydroxy-3-methylpentanoate = (S)-3-methyl-2-oxopentanoate + H2O. The protein operates within amino-acid biosynthesis; L-isoleucine biosynthesis; L-isoleucine from 2-oxobutanoate: step 3/4. It participates in amino-acid biosynthesis; L-valine biosynthesis; L-valine from pyruvate: step 3/4. In terms of biological role, functions in the biosynthesis of branched-chain amino acids. Catalyzes the dehydration of (2R,3R)-2,3-dihydroxy-3-methylpentanoate (2,3-dihydroxy-3-methylvalerate) into 2-oxo-3-methylpentanoate (2-oxo-3-methylvalerate) and of (2R)-2,3-dihydroxy-3-methylbutanoate (2,3-dihydroxyisovalerate) into 2-oxo-3-methylbutanoate (2-oxoisovalerate), the penultimate precursor to L-isoleucine and L-valine, respectively. The chain is Dihydroxy-acid dehydratase from Escherichia coli (strain K12 / MC4100 / BW2952).